A 450-amino-acid chain; its full sequence is L-galactonate dehydratase (450 aa).

The active site involves Lys221. Mg(2+)-binding residues include Asp251, Glu277, and Glu306. His356 is a catalytic residue.

Belongs to the mandelate racemase/muconate lactonizing enzyme family. Mg(2+) serves as cofactor.

The enzyme catalyses L-galactonate = 2-dehydro-3-deoxy-L-galactonate + H2O. It functions in the pathway carbohydrate acid metabolism. Functionally, mediates the conversion of L-galactonate to 2-dehydro-3-deoxy-L-galactonate, the second step in D-galacturonate catabolic process. The chain is L-galactonate dehydratase (lgd1) from Hypocrea jecorina (Trichoderma reesei).